The following is a 1010-amino-acid chain: Retinoblastoma-related protein 3 (1010 aa).

The segment at 416 to 616 is domain A; that stretch reads TPVSTAMTTA…EKGSSMYNSL (201 aa). The pocket stretch occupies residues 416 to 858; the sequence is TPVSTAMTTA…NEVFIPAVKS (443 aa). The tract at residues 617-727 is spacer; it reads IVARPALSVE…PAAGGETCAE (111 aa). The tract at residues 728 to 858 is domain B; sequence TGIGVFFSKI…NEVFIPAVKS (131 aa). 2 disordered regions span residues 867 to 889 and 986 to 1010; these read ASAS…FPES and GSDR…PSDS.

This sequence belongs to the retinoblastoma protein (RB) family.

The protein resides in the nucleus. Functionally, regulator of biological processes that recruits a histone deacetylase to control gene transcription. May play a role in the entry into mitosis, negatively regulating the cell proliferation. Formation of stable complexes with geminiviridae replication-associated proteins may create a cellular environment which favors viral DNA replication. The sequence is that of Retinoblastoma-related protein 3 (RBR3) from Zea mays (Maize).